A 735-amino-acid chain; its full sequence is Coiled-coil quantitatively-enriched protein 1 (735 aa).

Residues 514–719 are a coiled coil; sequence AAVQYLQRRL…TLKILEQKSL (206 aa).

As to quaternary structure, interacts (during meiosis) with pcp1. Interacts with clr3, pot1, taz1 and tpz1.

It localises to the nucleus. The protein resides in the nucleoplasm. Its subcellular location is the chromosome. The protein localises to the telomere. In terms of biological role, component of the meiotic bouquet that facilitates meiotic nuclear reorganization of the telomeres to the centrosome. Links telomeres to the meiotic centrosome component pcp1. Essential for the formation of normal telomere clusters during meiotic prophase. Required for telomere length regulation and chromosome segregation. Required for proper positioning of nucleosomes at heterochromatic loci and for transcriptional gene silencing (TGS) function of the Snf2/Hdac-containing repressor complex (SHREC). The protein is Coiled-coil quantitatively-enriched protein 1 (ccq1) of Schizosaccharomyces pombe (strain 972 / ATCC 24843) (Fission yeast).